A 281-amino-acid chain; its full sequence is sn-glycerol-3-phosphate transport system permease protein UgpE (281 aa).

Helical transmembrane passes span 16-36 (LILGIAVILFPLYVAFVAATL), 85-105 (FSITLGKITVSMLSAFAIVWF), 113-133 (FFWMIFITLMLPVEVRIFPTV), 142-162 (LDSYAGLTLPLMASATATFLF), 202-222 (ALFVITFIYGWNQYLWPLLII), and 247-267 (WNSVMAAMLLTLIPPVVIVLV). An ABC transmembrane type-1 domain is found at 77–268 (LLNSFVMAFS…IPPVVIVLVM (192 aa)).

This sequence belongs to the binding-protein-dependent transport system permease family. UgpAE subfamily. As to quaternary structure, the complex is composed of two ATP-binding proteins (UgpC), two transmembrane proteins (UgpA and UgpE) and a solute-binding protein (UgpB).

The protein localises to the cell inner membrane. Part of the ABC transporter complex UgpBAEC involved in sn-glycerol-3-phosphate (G3P) import. Probably responsible for the translocation of the substrate across the membrane. The protein is sn-glycerol-3-phosphate transport system permease protein UgpE (ugpE) of Escherichia coli O6:K15:H31 (strain 536 / UPEC).